A 976-amino-acid polypeptide reads, in one-letter code: Ephrin type-A receptor 1 (976 aa).

The first 25 residues, 1–25 (MERRWPLGLGLVLLLCAPLPPGARA), serve as a signal peptide directing secretion. Over 26–547 (KEVTLMDTSK…PVSRGLTGGE (522 aa)) the chain is Extracellular. Residues 27–209 (EVTLMDTSKA…FYQRCPETLN (183 aa)) form the Eph LBD domain. 2 consecutive Fibronectin type-III domains span residues 332 to 445 (PPSA…MGHA) and 447 to 538 (SLSG…TSPP). Asn-414 is a glycosylation site (N-linked (GlcNAc...) asparagine). Residues 548 to 568 (IVAVIFGLLLGAALLLGILVF) traverse the membrane as a helical segment. The Cytoplasmic segment spans residues 569 to 976 (RSRRAQRQRQ…ILCSIQGFKD (408 aa)). Phosphotyrosine; by autocatalysis is present on residues Tyr-599 and Tyr-605. The 261-residue stretch at 624–884 (LMVDTVIGEG…KLQAHLEQLL (261 aa)) folds into the Protein kinase domain. Residues 630–638 (IGEGEFGEV) and Lys-656 contribute to the ATP site. Asp-749 functions as the Proton acceptor in the catalytic mechanism. At Tyr-781 the chain carries Phosphotyrosine; by autocatalysis. Residues Ser-906 and Ser-910 each carry the phosphoserine modification. The SAM domain maps to 913 to 976 (IPYRTVSEWL…ILCSIQGFKD (64 aa)). Position 930 is a phosphotyrosine; by autocatalysis (Tyr-930). The short motif at 974 to 976 (FKD) is the PDZ-binding element.

It belongs to the protein kinase superfamily. Tyr protein kinase family. Ephrin receptor subfamily. In terms of assembly, homodimer. Forms a signaling complex with LCK; PTK2B/PYK2 and PI3-kinase upon activation by EFNA1; regulates T-lymphocytes migration. Interacts (via SAM domain) with ILK (via ANK repeats); stimulated by EFNA1 but independent of the kinase activity of EPHA1. Interacts (kinase activity-dependent) with PTK2/FAK1. In terms of processing, phosphorylated. Autophosphorylation is stimulated by its ligand EFNA1. Post-translationally, ubiquitinated. In terms of tissue distribution, overexpressed in several carcinomas.

It is found in the cell membrane. The catalysed reaction is L-tyrosyl-[protein] + ATP = O-phospho-L-tyrosyl-[protein] + ADP + H(+). In terms of biological role, receptor tyrosine kinase which binds promiscuously membrane-bound ephrin-A family ligands residing on adjacent cells, leading to contact-dependent bidirectional signaling into neighboring cells. The signaling pathway downstream of the receptor is referred to as forward signaling while the signaling pathway downstream of the ephrin ligand is referred to as reverse signaling. Binds with a low affinity EFNA3 and EFNA4 and with a high affinity to EFNA1 which most probably constitutes its cognate/functional ligand. Upon activation by EFNA1 induces cell attachment to the extracellular matrix inhibiting cell spreading and motility through regulation of ILK and downstream RHOA and RAC. Also plays a role in angiogenesis and regulates cell proliferation. May play a role in apoptosis. In Homo sapiens (Human), this protein is Ephrin type-A receptor 1 (EPHA1).